A 361-amino-acid chain; its full sequence is S-adenosylmethionine:tRNA ribosyltransferase-isomerase (361 aa).

It belongs to the QueA family. In terms of assembly, monomer.

The protein localises to the cytoplasm. The catalysed reaction is 7-aminomethyl-7-carbaguanosine(34) in tRNA + S-adenosyl-L-methionine = epoxyqueuosine(34) in tRNA + adenine + L-methionine + 2 H(+). It participates in tRNA modification; tRNA-queuosine biosynthesis. In terms of biological role, transfers and isomerizes the ribose moiety from AdoMet to the 7-aminomethyl group of 7-deazaguanine (preQ1-tRNA) to give epoxyqueuosine (oQ-tRNA). In Actinobacillus pleuropneumoniae serotype 5b (strain L20), this protein is S-adenosylmethionine:tRNA ribosyltransferase-isomerase.